Reading from the N-terminus, the 286-residue chain is ATP synthase gamma chain (286 aa).

Belongs to the ATPase gamma chain family. As to quaternary structure, F-type ATPases have 2 components, CF(1) - the catalytic core - and CF(0) - the membrane proton channel. CF(1) has five subunits: alpha(3), beta(3), gamma(1), delta(1), epsilon(1). CF(0) has three main subunits: a, b and c.

It is found in the cell inner membrane. Its function is as follows. Produces ATP from ADP in the presence of a proton gradient across the membrane. The gamma chain is believed to be important in regulating ATPase activity and the flow of protons through the CF(0) complex. This Shewanella frigidimarina (strain NCIMB 400) protein is ATP synthase gamma chain.